Here is a 468-residue protein sequence, read N- to C-terminus: Cysteine--tRNA ligase (468 aa).

Residue C28 coordinates Zn(2+). The 'HIGH' region signature appears at 30 to 40 (PTVYNYIHIGN). Zn(2+)-binding residues include C212, H237, and E241. The short motif at 271–275 (KMSKS) is the 'KMSKS' region element. K274 contributes to the ATP binding site.

This sequence belongs to the class-I aminoacyl-tRNA synthetase family. Monomer. Requires Zn(2+) as cofactor.

The protein localises to the cytoplasm. It carries out the reaction tRNA(Cys) + L-cysteine + ATP = L-cysteinyl-tRNA(Cys) + AMP + diphosphate. The protein is Cysteine--tRNA ligase of Latilactobacillus sakei subsp. sakei (strain 23K) (Lactobacillus sakei subsp. sakei).